Reading from the N-terminus, the 278-residue chain is Undecaprenyl-diphosphatase 2 (278 aa).

The next 7 helical transmembrane spans lie at Gly-43–Trp-63, Ala-88–Phe-108, Leu-119–Ile-139, Leu-149–Val-169, Phe-194–Gly-214, Leu-226–Val-246, and Phe-254–Ile-274.

It belongs to the UppP family.

Its subcellular location is the cell inner membrane. It catalyses the reaction di-trans,octa-cis-undecaprenyl diphosphate + H2O = di-trans,octa-cis-undecaprenyl phosphate + phosphate + H(+). Catalyzes the dephosphorylation of undecaprenyl diphosphate (UPP). Confers resistance to bacitracin. The polypeptide is Undecaprenyl-diphosphatase 2 (Agrobacterium fabrum (strain C58 / ATCC 33970) (Agrobacterium tumefaciens (strain C58))).